Reading from the N-terminus, the 272-residue chain is MGESYRIVLRTYAKLNLCLDVLGKRQDGYHEINSLFQNISLFDEMDITLSDGKGKLLINSNVNIGNNILNSVWELVNCDNKNVYVNLQKNIPMGGGLGGGSSNAAGFIIALEKVGIISKEQSLKIAQKVGSDVPFFLFGGTAIVKGRGEVILPVEPLTNFGKFKVDLHLPNFSISTKEAYSKLKAEWFGKAPITPEELYDFYKTRNFEMIKKGTYNIFERVIPMDLLEKIESLRRDFPAALTGSGSTYFALKEDGKYSFVPKGVEINAFEKS.

The active site involves Lys14. Position 92–102 (Pro92–Ser102) interacts with ATP. The active site involves Asp132.

Belongs to the GHMP kinase family. IspE subfamily.

The catalysed reaction is 4-CDP-2-C-methyl-D-erythritol + ATP = 4-CDP-2-C-methyl-D-erythritol 2-phosphate + ADP + H(+). It participates in isoprenoid biosynthesis; isopentenyl diphosphate biosynthesis via DXP pathway; isopentenyl diphosphate from 1-deoxy-D-xylulose 5-phosphate: step 3/6. Its function is as follows. Catalyzes the phosphorylation of the position 2 hydroxy group of 4-diphosphocytidyl-2C-methyl-D-erythritol. The sequence is that of 4-diphosphocytidyl-2-C-methyl-D-erythritol kinase from Fervidobacterium nodosum (strain ATCC 35602 / DSM 5306 / Rt17-B1).